The primary structure comprises 634 residues: MTNSNLRTENHFDYVKITLASPERVMSWGQRTLPNGQVVGEVTKPETINYRTLKPEMDGLFCEKIFGPSKDWECHCGKYKRVRHRGIVCERCGVEVTESRVRRHRMGFINLAAPVSHVWYLKGIPSYVAILLDMPLRDVEQIVYFNCYVVLDEGDHKDLKYKQLLTEDEWLEVEDEIYAEDSTIENEPVVGIGAEALKQLLEDLDLQEVAEQLREEITGSKGQKRAKLIKRLRVIDNFIATNARPEWMVLNAIPVIPPDLRPMVQLDGGRFATSDLNDLYRRVINRNNRLARLQEILAPEIIVRNEKRMLQEAVDALVDNGRRGRTVVGANNRALKSLSDIIEGKQGRFRQNLLGKRVDYSGRSVIVVGPKLKMHQCGLPKEMAIELFQPFVIHRLIRQNIVNNIKAAKKLIQRADDEVMQVLQEVIEGHPILLNRAPTLHRLGIQAFEPKLVAGRAIQLHPLVCPAFNADFDGDQMAVHVPLAIEAQTEARMLMLASNNILSPATGEPIVTPSQDMVLGSYYLTALQPDAVKPDFGDQSKTFAGLEDVIHAFEDKRINLHDWVWVRFNGEVEDDDELTSPLDTQILEDGTQIQQWTYRRDRLDEEGALISRFLLTTVGRVVMNNTIIDAVASG.

Zn(2+) is bound by residues C74, C76, C89, and C92. The Mg(2+) site is built by D471, D473, and D475.

The protein belongs to the RNA polymerase beta' chain family. RpoC1 subfamily. As to quaternary structure, in cyanobacteria the RNAP catalytic core is composed of 2 alpha, 1 beta, 1 beta', 1 gamma and 1 omega subunit. When a sigma factor is associated with the core the holoenzyme is formed, which can initiate transcription. Mg(2+) is required as a cofactor. Requires Zn(2+) as cofactor.

It catalyses the reaction RNA(n) + a ribonucleoside 5'-triphosphate = RNA(n+1) + diphosphate. In terms of biological role, DNA-dependent RNA polymerase catalyzes the transcription of DNA into RNA using the four ribonucleoside triphosphates as substrates. The sequence is that of DNA-directed RNA polymerase subunit gamma from Prochlorococcus marinus (strain SARG / CCMP1375 / SS120).